The primary structure comprises 164 residues: Protein-export protein SecB (164 aa).

It belongs to the SecB family. Homotetramer, a dimer of dimers. One homotetramer interacts with 1 SecA dimer.

It is found in the cytoplasm. One of the proteins required for the normal export of preproteins out of the cell cytoplasm. It is a molecular chaperone that binds to a subset of precursor proteins, maintaining them in a translocation-competent state. It also specifically binds to its receptor SecA. The protein is Protein-export protein SecB of Janthinobacterium sp. (strain Marseille) (Minibacterium massiliensis).